We begin with the raw amino-acid sequence, 456 residues long: Histidine--tRNA ligase (456 aa).

This sequence belongs to the class-II aminoacyl-tRNA synthetase family. In terms of assembly, homodimer.

The protein localises to the cytoplasm. It carries out the reaction tRNA(His) + L-histidine + ATP = L-histidyl-tRNA(His) + AMP + diphosphate + H(+). The polypeptide is Histidine--tRNA ligase (Borrelia garinii subsp. bavariensis (strain ATCC BAA-2496 / DSM 23469 / PBi) (Borreliella bavariensis)).